The sequence spans 157 residues: Vesicle transport protein SFT2B (157 aa).

M1 carries the N-acetylmethionine modification. Residues M1–G36 are Cytoplasmic-facing. The residue at position 9 (S9) is a Phosphoserine. Residues F37–V57 form a helical membrane-spanning segment. Residues S58 to G61 lie on the Lumenal side of the membrane. A helical membrane pass occupies residues L62–M82. Over G83–R96 the chain is Cytoplasmic. A helical membrane pass occupies residues L97–W117. The Lumenal portion of the chain corresponds to N118–G120. Residues L121 to I141 traverse the membrane as a helical segment. The Cytoplasmic segment spans residues P142 to T157.

The protein belongs to the SFT2 family.

It is found in the membrane. In terms of biological role, may be involved in fusion of retrograde transport vesicles derived from an endocytic compartment with the Golgi complex. This chain is Vesicle transport protein SFT2B, found in Rattus norvegicus (Rat).